A 192-amino-acid chain; its full sequence is NADH-quinone oxidoreductase subunit B 1 (192 aa).

Positions 71, 72, 136, and 166 each coordinate [4Fe-4S] cluster.

The protein belongs to the complex I 20 kDa subunit family. In terms of assembly, NDH-1 is composed of 14 different subunits. Subunits NuoB, C, D, E, F, and G constitute the peripheral sector of the complex. The cofactor is [4Fe-4S] cluster.

The protein resides in the cell inner membrane. It carries out the reaction a quinone + NADH + 5 H(+)(in) = a quinol + NAD(+) + 4 H(+)(out). Its function is as follows. NDH-1 shuttles electrons from NADH, via FMN and iron-sulfur (Fe-S) centers, to quinones in the respiratory chain. The immediate electron acceptor for the enzyme in this species is believed to be ubiquinone. Couples the redox reaction to proton translocation (for every two electrons transferred, four hydrogen ions are translocated across the cytoplasmic membrane), and thus conserves the redox energy in a proton gradient. This is NADH-quinone oxidoreductase subunit B 1 from Rhizobium meliloti (strain 1021) (Ensifer meliloti).